The chain runs to 431 residues: SH2 domain-containing protein 4B (431 aa).

The interval 201–235 is disordered; the sequence is QASENEEREWEEQLRRSKAADEERSRRAQRARDEY. The segment covering 211–235 has biased composition (basic and acidic residues); sequence EEQLRRSKAADEERSRRAQRARDEY. In terms of domain architecture, SH2 spans 325 to 417; the sequence is WFHGIISRES…SGGELLQEPC (93 aa).

The chain is SH2 domain-containing protein 4B (Sh2d4b) from Mus musculus (Mouse).